The sequence spans 248 residues: MNVLISNDDGYLSEGIAVLARVTAEFANVRVVAPERDRSGVSNSLTLERPLQLKQAQNGFYYVNGTPTDCIHIGQSVFSDFQADFVFSGINRGANMGDDTLYSGTVAAATEAYLMGMPAVAFSLNDASGRYWATAEQALWTLLAHFFKNPPQSPILWNINIPAVAPEDVRGIKIARLGRRHHGQNVIPARNPRGEQIYWIGPVGEVSDREEGTDFGECEAGFITVTPLQIDLTAYRDMAETAVFWHTD.

Residues D8, D9, S39, and N91 each contribute to the a divalent metal cation site.

The protein belongs to the SurE nucleotidase family. Requires a divalent metal cation as cofactor.

It localises to the cytoplasm. It catalyses the reaction a ribonucleoside 5'-phosphate + H2O = a ribonucleoside + phosphate. Functionally, nucleotidase that shows phosphatase activity on nucleoside 5'-monophosphates. This Neisseria meningitidis serogroup A / serotype 4A (strain DSM 15465 / Z2491) protein is 5'-nucleotidase SurE.